A 302-amino-acid chain; its full sequence is Recombination-associated protein RdgC (302 aa).

The protein belongs to the RdgC family.

The protein resides in the cytoplasm. Its subcellular location is the nucleoid. In terms of biological role, may be involved in recombination. This Tolumonas auensis (strain DSM 9187 / NBRC 110442 / TA 4) protein is Recombination-associated protein RdgC.